Reading from the N-terminus, the 512-residue chain is tRNA-2-methylthio-N(6)-dimethylallyladenosine synthase (512 aa).

The 117-residue stretch at 23–139 (RTYQVRTYGC…LPTLLERARH (117 aa)) folds into the MTTase N-terminal domain. [4Fe-4S] cluster-binding residues include Cys-32, Cys-68, Cys-102, Cys-176, Cys-180, and Cys-183. Residues 162–398 (RESAYAAWVS…IELQERISLE (237 aa)) enclose the Radical SAM core domain. The 69-residue stretch at 401–469 (REQVGRAVEL…PHHLIADAPI (69 aa)) folds into the TRAM domain. Residues 477–512 (AGDAHAAGQKPRTGVGLGMPRIGAPAPSATAEGCGC) are disordered.

The protein belongs to the methylthiotransferase family. MiaB subfamily. Monomer. [4Fe-4S] cluster is required as a cofactor.

The protein localises to the cytoplasm. It catalyses the reaction N(6)-dimethylallyladenosine(37) in tRNA + (sulfur carrier)-SH + AH2 + 2 S-adenosyl-L-methionine = 2-methylsulfanyl-N(6)-dimethylallyladenosine(37) in tRNA + (sulfur carrier)-H + 5'-deoxyadenosine + L-methionine + A + S-adenosyl-L-homocysteine + 2 H(+). Functionally, catalyzes the methylthiolation of N6-(dimethylallyl)adenosine (i(6)A), leading to the formation of 2-methylthio-N6-(dimethylallyl)adenosine (ms(2)i(6)A) at position 37 in tRNAs that read codons beginning with uridine. The polypeptide is tRNA-2-methylthio-N(6)-dimethylallyladenosine synthase (Mycolicibacterium smegmatis (strain ATCC 700084 / mc(2)155) (Mycobacterium smegmatis)).